The following is a 246-amino-acid chain: tRNA (guanine-N(1)-)-methyltransferase (246 aa).

Residues glycine 117 and 137 to 142 (IGDYVL) contribute to the S-adenosyl-L-methionine site.

The protein belongs to the RNA methyltransferase TrmD family. Homodimer.

Its subcellular location is the cytoplasm. It catalyses the reaction guanosine(37) in tRNA + S-adenosyl-L-methionine = N(1)-methylguanosine(37) in tRNA + S-adenosyl-L-homocysteine + H(+). In terms of biological role, specifically methylates guanosine-37 in various tRNAs. The polypeptide is tRNA (guanine-N(1)-)-methyltransferase (Acinetobacter baumannii (strain AB307-0294)).